We begin with the raw amino-acid sequence, 152 residues long: Urease accessory protein UreE (152 aa).

Belongs to the UreE family.

The protein resides in the cytoplasm. Involved in urease metallocenter assembly. Binds nickel. Probably functions as a nickel donor during metallocenter assembly. The sequence is that of Urease accessory protein UreE from Psychromonas ingrahamii (strain DSM 17664 / CCUG 51855 / 37).